The primary structure comprises 106 residues: Large ribosomal subunit protein bL21 (106 aa).

The protein belongs to the bacterial ribosomal protein bL21 family. Part of the 50S ribosomal subunit. Contacts protein L20.

In terms of biological role, this protein binds to 23S rRNA in the presence of protein L20. This chain is Large ribosomal subunit protein bL21, found in Xylella fastidiosa (strain Temecula1 / ATCC 700964).